Consider the following 115-residue polypeptide: NADH-ubiquinone oxidoreductase chain 3 (115 aa).

3 consecutive transmembrane segments (helical) span residues 3 to 23 (LFVA…VAFW), 55 to 75 (FFLV…LLPL), and 84 to 104 (LSAM…GLIY).

The protein belongs to the complex I subunit 3 family. As to quaternary structure, core subunit of respiratory chain NADH dehydrogenase (Complex I) which is composed of 45 different subunits. Interacts with TMEM186. Interacts with TMEM242.

The protein localises to the mitochondrion inner membrane. The catalysed reaction is a ubiquinone + NADH + 5 H(+)(in) = a ubiquinol + NAD(+) + 4 H(+)(out). Its function is as follows. Core subunit of the mitochondrial membrane respiratory chain NADH dehydrogenase (Complex I) which catalyzes electron transfer from NADH through the respiratory chain, using ubiquinone as an electron acceptor. Essential for the catalytic activity of complex I. The protein is NADH-ubiquinone oxidoreductase chain 3 of Sigmodon hispidus (Hispid cotton rat).